The chain runs to 206 residues: Pyrrolidone-carboxylate peptidase (206 aa).

Active-site residues include Glu-78, Cys-141, and His-165.

This sequence belongs to the peptidase C15 family. In terms of assembly, homotetramer.

It is found in the cytoplasm. It carries out the reaction Release of an N-terminal pyroglutamyl group from a polypeptide, the second amino acid generally not being Pro.. Its function is as follows. Removes 5-oxoproline from various penultimate amino acid residues except L-proline. The protein is Pyrrolidone-carboxylate peptidase of Thermococcus kodakarensis (strain ATCC BAA-918 / JCM 12380 / KOD1) (Pyrococcus kodakaraensis (strain KOD1)).